We begin with the raw amino-acid sequence, 232 residues long: Probable fimbrial chaperone LpfB (232 aa).

An N-terminal signal peptide occupies residues 1–24 (MDRMMKSKFVALALSLFLSQSVLA).

This sequence belongs to the periplasmic pilus chaperone family.

The protein resides in the periplasm. Its function is as follows. Part of the lpfABCC'DE fimbrial operon. LP fimbriae may participate in the interaction with eukaryotic cells by assisting in microcolony formation. The protein is Probable fimbrial chaperone LpfB (lpfB) of Escherichia coli O157:H7.